Here is a 1567-residue protein sequence, read N- to C-terminus: ABC multidrug transporter MDR1 (1567 aa).

Residues M1 to G11 are compositionally biased toward pro residues. The segment at M1–D37 is disordered. The span at S22–P32 shows a compositional bias: polar residues. N149, N157, and N356 each carry an N-linked (GlcNAc...) asparagine glycan. The ABC transporter 1 domain occupies V167–P432. The next 6 helical transmembrane spans lie at S543–F563, G571–I591, I636–L656, A661–F681, I691–F711, and L798–L818. N-linked (GlcNAc...) asparagine glycosylation is found at N819, N895, and N912. Residues F891–A1134 form the ABC transporter 2 domain. Position 927–934 (G927–T934) interacts with ATP. The interval E1172 to P1202 is disordered. The chain crosses the membrane as a helical span at residues I1231–L1251. An N-linked (GlcNAc...) asparagine glycan is attached at N1253. Helical transmembrane passes span A1257–V1277, V1305–A1325, I1345–I1365, E1372–L1392, and G1498–I1518.

Belongs to the ABC transporter superfamily. ABCG family. PDR (TC 3.A.1.205) subfamily.

The protein localises to the cell membrane. The catalysed reaction is voriconazole(in) + ATP + H2O = voriconazole(out) + ADP + phosphate + H(+). It carries out the reaction fluconazole(in) + ATP + H2O = fluconazole(out) + ADP + phosphate + H(+). It catalyses the reaction (R)-miconazole(in) + ATP + H2O = (R)-miconazole(out) + ADP + phosphate + H(+). The enzyme catalyses (S)-miconazole(in) + ATP + H2O = (S)-miconazole(out) + ADP + phosphate + H(+). Its function is as follows. Pleiotropic ABC efflux transporter that may be involved in the modulation susceptibility to a wide range of unrelated cytotoxic compounds. The chain is ABC multidrug transporter MDR1 from Trichophyton tonsurans (strain CBS 112818) (Scalp ringworm fungus).